The chain runs to 547 residues: Leiomodin-2 (547 aa).

Residues 1–47 form an interaction with tropomyosin alpha region; sequence MSTFGYRRGLSKYESIDEDELLASLSAEELKELERELEDIEPDRNLP. Interaction with actin regions lie at residues 1-161, 162-497, and 521-540; these read MSTF…SDNS, KPKI…KEIK, and AHENLMEAIRGSSIKQLKRV. A phosphoserine mark is found at serine 11, serine 15, and serine 24. The stretch at 16-41 forms a coiled coil; the sequence is IDEDELLASLSAEELKELERELEDIE. Disordered regions lie at residues 91–162 and 352–533; these read KVAE…DNSK and MDKQ…RGSS. Composition is skewed to acidic residues over residues 95-104 and 112-139; these read DKEESEEELI and VSEEVYTEEEEEESQEEEEEEDSDEEER. The stretch at 113 to 148 forms a coiled coil; that stretch reads SEEVYTEEEEEESQEEEEEEDSDEEERTIETAKGIN. A compositionally biased stretch (polar residues) spans 149-160; that stretch reads GTVNYDSVNSDN. Positions 352 to 367 are enriched in basic and acidic residues; that stretch reads MDKQRQKRLQEQKQQE. Serine 400 is subject to Phosphoserine. A compositionally biased stretch (pro residues) spans 419 to 449; it reads ATPPPPPPPPPPPPPSSQRLPPPPPPPPPPL. Over residues 465–475 the composition is skewed to polar residues; the sequence is QQESAQRALQN. Residues 477–487 show a composition bias toward basic residues; the sequence is QKKKKGKKVKK. Residues 494–512 show a composition bias toward basic and acidic residues; it reads KEIKNSLRSVQEKKMEDSS. One can recognise a WH2 domain in the interval 521–540; the sequence is AHENLMEAIRGSSIKQLKRV.

It belongs to the tropomodulin family. Can bind at least three actin monomers and thereby provides a nucleus for actin filament formation. Interacts (via N-terminus) with tropomyosin alpha (TPM1) (via N-terminus). May also interact with TPM2 (via N-terminus). Interacts with FLII. In terms of tissue distribution, specifically expressed in heart and skeletal muscles, with higher levels in heart (at protein level). Not expressed in other tissues.

It localises to the cytoplasm. Its subcellular location is the myofibril. The protein resides in the sarcomere. It is found in the m line. The protein localises to the cytoskeleton. In terms of biological role, mediates nucleation of actin filaments and thereby promotes actin polymerization. Plays a role in the regulation of actin filament length. Required for normal sarcomere organization in the heart, and for normal heart function. The protein is Leiomodin-2 (LMOD2) of Homo sapiens (Human).